The chain runs to 529 residues: uncharacterized protein (529 aa).

A DNA-binding region (zn(2)-C6 fungal-type) is located at residues 26–58; that stretch reads CDSCRKQKTRCLAGSVEDENRACLRCRSLNMDC.

It is found in the nucleus. This is an uncharacterized protein from Schizosaccharomyces pombe (strain 972 / ATCC 24843) (Fission yeast).